Reading from the N-terminus, the 173-residue chain is Nuclear transcription factor Y subunit B-8 (173 aa).

The disordered stretch occupies residues M1–E30. At A2 the chain carries N-acetylalanine. The DNA-binding element occupies L35–S41. Residues V62 to V73 form a subunit association domain (SAD) region. The disordered stretch occupies residues D123–D173. A compositionally biased stretch (polar residues) spans Q140–Q163.

It belongs to the NFYB/HAP3 subunit family. In terms of assembly, heterotrimeric transcription factor composed of three components, NF-YA, NF-YB and NF-YC. NF-YB and NF-YC must interact and dimerize for NF-YA association and DNA binding. In terms of tissue distribution, expressed in flowers and mature rosettes.

Its subcellular location is the nucleus. In terms of biological role, component of the NF-Y/HAP transcription factor complex. The NF-Y complex stimulates the transcription of various genes by recognizing and binding to a CCAAT motif in promoters. The polypeptide is Nuclear transcription factor Y subunit B-8 (NFYB8) (Arabidopsis thaliana (Mouse-ear cress)).